A 397-amino-acid polypeptide reads, in one-letter code: Cell division protein DivIB (397 aa).

The Cytoplasmic segment spans residues 1 to 138; sequence MTTKDKGDQK…RIERIHLYRA (138 aa). The span at 24–37 shows a compositional bias: basic and acidic residues; sequence QEYLEKKSQEKASE. A disordered region spans residues 24–115; the sequence is QEYLEKKSQE…DRTEKFIGQA (92 aa). A compositionally biased stretch (acidic residues) spans 74-103; it reads ASDDDETNESEESEDVEEPEEENIEESSDV. A helical transmembrane segment spans residues 139–159; the sequence is LPVLVISSLLILLSLYFITPL. The POTRA domain maps to 160–231; the sequence is GSLKNLVVTG…ITFKIQVTEY (72 aa). Over 160-397 the chain is Extracellular; that stretch reads GSLKNLVVTG…PSDVTDETNN (238 aa). The disordered stretch occupies residues 360 to 397; that stretch reads LVQKEEQDQEQEKEESSEETVPGETEAAPSDVTDETNN. Residues 366 to 377 are compositionally biased toward acidic residues; it reads QDQEQEKEESSE.

The protein belongs to the FtsQ/DivIB family. DivIB subfamily.

The protein localises to the cell membrane. Cell division protein that may be involved in stabilizing or promoting the assembly of the division complex. This chain is Cell division protein DivIB, found in Streptococcus gordonii (strain Challis / ATCC 35105 / BCRC 15272 / CH1 / DL1 / V288).